We begin with the raw amino-acid sequence, 129 residues long: Probable protein cornichon homolog 2 (129 aa).

2 consecutive transmembrane segments (helical) span residues 45–65 (FIVQ…FMTL) and 105–125 (LAYI…SALD).

Belongs to the cornichon family.

Its subcellular location is the membrane. The protein is Probable protein cornichon homolog 2 of Arabidopsis thaliana (Mouse-ear cress).